Consider the following 118-residue polypeptide: Large ribosomal subunit protein bL20 (118 aa).

The protein belongs to the bacterial ribosomal protein bL20 family.

Functionally, binds directly to 23S ribosomal RNA and is necessary for the in vitro assembly process of the 50S ribosomal subunit. It is not involved in the protein synthesizing functions of that subunit. This Desulfotalea psychrophila (strain LSv54 / DSM 12343) protein is Large ribosomal subunit protein bL20.